Consider the following 492-residue polypeptide: Bifunctional purine biosynthesis protein PurH (492 aa).

In terms of domain architecture, MGS-like spans 1-144; sequence MKKAILSVSN…KNYKHVTTIV (144 aa).

This sequence belongs to the PurH family.

The enzyme catalyses (6R)-10-formyltetrahydrofolate + 5-amino-1-(5-phospho-beta-D-ribosyl)imidazole-4-carboxamide = 5-formamido-1-(5-phospho-D-ribosyl)imidazole-4-carboxamide + (6S)-5,6,7,8-tetrahydrofolate. It carries out the reaction IMP + H2O = 5-formamido-1-(5-phospho-D-ribosyl)imidazole-4-carboxamide. Its pathway is purine metabolism; IMP biosynthesis via de novo pathway; 5-formamido-1-(5-phospho-D-ribosyl)imidazole-4-carboxamide from 5-amino-1-(5-phospho-D-ribosyl)imidazole-4-carboxamide (10-formyl THF route): step 1/1. It functions in the pathway purine metabolism; IMP biosynthesis via de novo pathway; IMP from 5-formamido-1-(5-phospho-D-ribosyl)imidazole-4-carboxamide: step 1/1. The sequence is that of Bifunctional purine biosynthesis protein PurH from Staphylococcus aureus (strain MRSA252).